A 364-amino-acid polypeptide reads, in one-letter code: Probable methyltransferase ICS2 (364 aa).

Tyr18, Cys61, Asp98, Leu99, Ser133, and Phe134 together coordinate S-adenosyl-L-homocysteine. 4 residues coordinate Mg(2+): Asn172, Asp258, Phe260, and Asn261.

The protein belongs to the methyltransferase superfamily. Type-7 methyltransferase family. The cofactor is Mg(2+).

Functionally, no detectable N-methyltransferase activity. The chain is Probable methyltransferase ICS2 from Camellia irrawadiensis (Burmese tea).